The following is a 92-amino-acid chain: Small ribosomal subunit protein uS19 (92 aa).

Belongs to the universal ribosomal protein uS19 family.

Functionally, protein S19 forms a complex with S13 that binds strongly to the 16S ribosomal RNA. The chain is Small ribosomal subunit protein uS19 from Bradyrhizobium sp. (strain BTAi1 / ATCC BAA-1182).